Here is a 143-residue protein sequence, read N- to C-terminus: Cytochrome c-type biogenesis protein CcmE (143 aa).

The Cytoplasmic portion of the chain corresponds to 1-8; that stretch reads MNPVRRRK. The helical; Signal-anchor for type II membrane protein transmembrane segment at 9-29 threads the bilayer; it reads LFILLFALTILSAAAALVLYA. Topologically, residues 30-143 are periplasmic; sequence LRQNISLFYT…KSALADKVKQ (114 aa). Residues His-124 and Tyr-128 each contribute to the heme site.

This sequence belongs to the CcmE/CycJ family.

The protein resides in the cell inner membrane. In terms of biological role, heme chaperone required for the biogenesis of c-type cytochromes. Transiently binds heme delivered by CcmC and transfers the heme to apo-cytochromes in a process facilitated by CcmF and CcmH. The sequence is that of Cytochrome c-type biogenesis protein CcmE from Legionella pneumophila (strain Corby).